A 318-amino-acid polypeptide reads, in one-letter code: NLP effector protein 7 (318 aa).

An N-terminal signal peptide occupies residues 1-19 (MRLFAFLWSSVAFLSTVQA). Over residues 23–41 (QTASQTQDDSSTPTPTPTD) the composition is skewed to low complexity. Disordered stretches follow at residues 23 to 42 (QTAS…PTDK) and 51 to 96 (RTKT…TPDP). Over residues 55–65 (PMATPNRTIMP) the composition is skewed to polar residues. The N-linked (GlcNAc...) asparagine glycan is linked to Asn-60. Residues 73–96 (TEPPTPEPTYLPTPSPTPAPTPDP) show a composition bias toward pro residues. The short motif at 185–195 (AIMYSWYFPKD) is the Conserved undecapeptide motif I element. The short motif at 202 to 208 (GHRHDWE) is the Hepta-peptide GHRHDWE motif II element.

It belongs to the Necrosis inducing protein (NPP1) family.

The protein localises to the secreted. In terms of biological role, secreted effector that contributes moderately to virulence during infection by P.capsici. Does not cause visible reaction of C.annuum for several days after inoculation, but by 7 days after inoculation, small necrotic lesions become visible. Leads only to chlorotic areas, without necrosis at 7 days after non-host N.benthamiana leaves infection. The polypeptide is NLP effector protein 7 (Phytophthora capsici).